A 385-amino-acid polypeptide reads, in one-letter code: Cytochrome b (385 aa).

A run of 4 helical transmembrane segments spans residues 32-52 (MGSL…FMAM), 76-98 (YILR…MHMA), 113-133 (LWNV…LGYC), and 179-199 (FFAL…MHLM). Residues H82 and H96 each contribute to the heme b site. Heme b contacts are provided by H183 and H197. H202 contacts a ubiquinone. The next 4 membrane-spanning stretches (helical) occupy residues 225 to 245 (FIFK…LFVF), 289 to 309 (LLGV…PFTD), 321 to 341 (LSKF…QIGA), and 348 to 368 (YVLM…IIVP).

Belongs to the cytochrome b family. In terms of assembly, fungal cytochrome b-c1 complex contains 10 subunits; 3 respiratory subunits, 2 core proteins and 5 low-molecular weight proteins. Cytochrome b-c1 complex is a homodimer. Heme b is required as a cofactor.

It localises to the mitochondrion inner membrane. Its function is as follows. Component of the ubiquinol-cytochrome c reductase complex (complex III or cytochrome b-c1 complex) that is part of the mitochondrial respiratory chain. The b-c1 complex mediates electron transfer from ubiquinol to cytochrome c. Contributes to the generation of a proton gradient across the mitochondrial membrane that is then used for ATP synthesis. This is Cytochrome b (COB) from Saccharomyces paradoxus (Yeast).